We begin with the raw amino-acid sequence, 419 residues long: LanC-like protein 3 homolog (419 aa).

This sequence belongs to the LanC-like protein family.

This chain is LanC-like protein 3 homolog, found in Drosophila melanogaster (Fruit fly).